A 141-amino-acid chain; its full sequence is Large ribosomal subunit protein uL11 (141 aa).

This sequence belongs to the universal ribosomal protein uL11 family. As to quaternary structure, part of the ribosomal stalk of the 50S ribosomal subunit. Interacts with L10 and the large rRNA to form the base of the stalk. L10 forms an elongated spine to which L12 dimers bind in a sequential fashion forming a multimeric L10(L12)X complex. In terms of processing, one or more lysine residues are methylated.

Forms part of the ribosomal stalk which helps the ribosome interact with GTP-bound translation factors. This chain is Large ribosomal subunit protein uL11, found in Amoebophilus asiaticus (strain 5a2).